Reading from the N-terminus, the 94-residue chain is MTRGTPAFGKRHQKTHTLCRRCGKATYHKQKLRCAACGYPDAKMRRYDGWGQKVRDRKGQGTGRMRYMKTIARRAKNGFRSGTQAAPKVKAATN.

Zn(2+) contacts are provided by Cys-19, Cys-22, Cys-34, and Cys-37. Residues 19-37 (CRRCGKATYHKQKLRCAAC) form a C4-type zinc finger.

It belongs to the eukaryotic ribosomal protein eL37 family. Zn(2+) serves as cofactor.

It localises to the cytoplasm. Binds to the 23S rRNA. This chain is Large ribosomal subunit protein eL37 (RPL37), found in Tetrahymena thermophila (strain SB210).